Here is a 351-residue protein sequence, read N- to C-terminus: Uroporphyrinogen decarboxylase (351 aa).

Substrate is bound by residues Arg-26 to Arg-30, Asp-75, Tyr-151, Ser-206, and His-321.

It belongs to the uroporphyrinogen decarboxylase family. As to quaternary structure, homodimer.

It localises to the cytoplasm. It carries out the reaction uroporphyrinogen III + 4 H(+) = coproporphyrinogen III + 4 CO2. It participates in porphyrin-containing compound metabolism; protoporphyrin-IX biosynthesis; coproporphyrinogen-III from 5-aminolevulinate: step 4/4. In terms of biological role, catalyzes the decarboxylation of four acetate groups of uroporphyrinogen-III to yield coproporphyrinogen-III. The chain is Uroporphyrinogen decarboxylase from Koribacter versatilis (strain Ellin345).